A 253-amino-acid polypeptide reads, in one-letter code: Ribosomal RNA small subunit methyltransferase J (253 aa).

S-adenosyl-L-methionine contacts are provided by residues 123–124 and D176; that span reads ER.

Belongs to the methyltransferase superfamily. RsmJ family.

The protein resides in the cytoplasm. It catalyses the reaction guanosine(1516) in 16S rRNA + S-adenosyl-L-methionine = N(2)-methylguanosine(1516) in 16S rRNA + S-adenosyl-L-homocysteine + H(+). Functionally, specifically methylates the guanosine in position 1516 of 16S rRNA. This chain is Ribosomal RNA small subunit methyltransferase J, found in Magnetococcus marinus (strain ATCC BAA-1437 / JCM 17883 / MC-1).